A 120-amino-acid polypeptide reads, in one-letter code: Sirohydrochlorin cobaltochelatase (120 aa).

His9 serves as the catalytic Proton acceptor. His9 contacts Co(2+). Substrate contacts are provided by residues Gln43 and 68–73 (FAAGTH). His73 contributes to the Co(2+) binding site.

Belongs to the CbiX family. CbiXS subfamily. As to quaternary structure, homotetramer; dimer of dimers.

It carries out the reaction Co-sirohydrochlorin + 2 H(+) = sirohydrochlorin + Co(2+). It functions in the pathway cofactor biosynthesis; adenosylcobalamin biosynthesis; cob(II)yrinate a,c-diamide from sirohydrochlorin (anaerobic route): step 1/10. Catalyzes the insertion of Co(2+) into sirohydrochlorin as part of the anaerobic pathway to cobalamin biosynthesis. This Sulfurisphaera tokodaii (strain DSM 16993 / JCM 10545 / NBRC 100140 / 7) (Sulfolobus tokodaii) protein is Sirohydrochlorin cobaltochelatase.